Reading from the N-terminus, the 675-residue chain is Vitamin K-dependent protein S (675 aa).

The signal sequence occupies residues 1–24 (MRVLSVRFRVLLACLALVLPNSET). A propeptide spanning residues 25 to 41 (NFLSKERASQVLVRKRR) is cleaved from the precursor. The region spanning 42-87 (ANTLLEETKKGNLERECIEELCNKEEAREVFENNPETDYFYPKYLG) is the Gla domain. 11 positions are modified to 4-carboxyglutamate: E47, E48, E55, E57, E60, E61, E66, E67, E70, E73, and E77. Cysteines 58 and 63 form a disulfide. The tract at residues 88–116 (CLGAFRVGAFSAARQSANAYPDLRSCVNA) is thrombin-sensitive. Positions 117-155 (IPDQCDPMPCNEDGYLSCKDGQGAFTCICKPGWQGDKCQ) constitute an EGF-like 1 domain. 13 cysteine pairs are disulfide-bonded: C121/C134, C126/C143, C145/C154, C161/C175, C171/C184, C186/C199, C205/C217, C212/C226, C228/C241, C247/C256, C252/C265, C267/C282, and C449/C475. Position 136 is a (3R)-3-hydroxyaspartate (D136). Residues 157-200 (DINECKDPSNINGGCSQTCDNTPGSYHCSCKIGFAMLTNKKDCK) enclose the EGF-like 2; calcium-binding domain. The EGF-like 3; calcium-binding domain occupies 201-242 (DVDECSLKPSVCGTAVCKNIPGDFECECPNGYRYDPSSKSCK). An EGF-like 4; calcium-binding domain is found at 243-283 (DVDECSENTCAQLCVNYPGGYSCYCDGKKGFKLAQDQRSCE). 2 consecutive Laminin G-like domains span residues 299–475 (LLYL…NKHC) and 484–665 (YYPG…AHSC). N499 and N509 each carry an N-linked (GlcNAc...) asparagine glycan.

The iron and 2-oxoglutarate dependent 3-hydroxylation of aspartate and asparagine is (R) stereospecific within EGF domains. Plasma.

The protein localises to the secreted. Anticoagulant plasma protein; it is a cofactor to activated protein C in the degradation of coagulation factors Va and VIIIa. It helps to prevent coagulation and stimulating fibrinolysis. The polypeptide is Vitamin K-dependent protein S (Pros1) (Rattus norvegicus (Rat)).